A 187-amino-acid polypeptide reads, in one-letter code: Elongation factor P (187 aa).

This sequence belongs to the elongation factor P family.

It localises to the cytoplasm. It participates in protein biosynthesis; polypeptide chain elongation. Functionally, involved in peptide bond synthesis. Stimulates efficient translation and peptide-bond synthesis on native or reconstituted 70S ribosomes in vitro. Probably functions indirectly by altering the affinity of the ribosome for aminoacyl-tRNA, thus increasing their reactivity as acceptors for peptidyl transferase. This chain is Elongation factor P, found in Corynebacterium kroppenstedtii (strain DSM 44385 / JCM 11950 / CIP 105744 / CCUG 35717).